Consider the following 393-residue polypeptide: 5-azacytidine-induced protein 2 (393 aa).

The interval 1 to 198 (MDALVEDDIC…IELQKAKQTD (198 aa)) is homodimerization. Residues 40–198 (ALVTAYEDIK…IELQKAKQTD (159 aa)) adopt a coiled-coil conformation. Residues 217–258 (SDNMQSAYWELKREMSNLHLVTQVQAELLRKLKTPAAIKKAC) are interaction with TBK1 and IKBKE. Residue serine 319 is modified to Phosphoserine. 2 disordered regions span residues 321–340 (TDHE…HNSY) and 345–393 (LEDN…HYKH). Residue serine 354 is modified to Phosphoserine. Positions 384-393 (QHNQNCHYKH) are enriched in polar residues.

As to quaternary structure, homodimer. Interacts with IKBKE, TBK1 and TICAM1. Interacts with TAX1BP1. Interacts with CALCOCO2. In terms of processing, ubiquitinated via 'Lys-48'-linked polyubiquitination by TRIM38, leading to its degradation.

Its subcellular location is the cytoplasm. Functionally, adapter protein which binds TBK1 and IKBKE playing a role in antiviral innate immunity. Activates serine/threonine-protein kinase TBK1 and facilitates its oligomerization. Enhances the phosphorylation of NF-kappa-B p65 subunit RELA by TBK1. Promotes TBK1-induced as well as TNF-alpha or PMA-induced activation of NF-kappa-B. Participates in IFNB promoter activation via TICAM1. The sequence is that of 5-azacytidine-induced protein 2 (AZI2) from Bos taurus (Bovine).